The chain runs to 241 residues: MSQIIWGAYAQRNTEDHPPAYAPGYKTSVLRSPKNALISIAETLSEVTAPHFSADKFGPKDNDLILNYAKDGLPIGERVIVHGYVRDQFGRPVKNALVEVWQANASGRYRHPNDQYIGAMDPNFGGCGRMLTDDNGYYVFRTIKPGPYPWRNRINEWRPAHIHFSLIADGWAQRLISQFYFEGDTLIDSCPILKTIPSEQQRRALIALEDKSNFIEADSRCYRFDITLRGRRATYFENDLT.

Fe cation contacts are provided by tyrosine 109, tyrosine 148, histidine 161, and histidine 163.

It belongs to the intradiol ring-cleavage dioxygenase family. In terms of assembly, the enzyme is an oligomer of 12 copies of the alpha and beta chains. The cofactor is Fe(3+).

It catalyses the reaction 3,4-dihydroxybenzoate + O2 = 3-carboxy-cis,cis-muconate + 2 H(+). Its pathway is aromatic compound metabolism; beta-ketoadipate pathway; 3-carboxy-cis,cis-muconate from 3,4-dihydroxybenzoate: step 1/1. Plays an essential role in the utilization of numerous aromatic and hydroaromatic compounds via the beta-ketoadipate pathway. This is Protocatechuate 3,4-dioxygenase beta chain (pcaH) from Acinetobacter baylyi (strain ATCC 33305 / BD413 / ADP1).